Here is a 517-residue protein sequence, read N- to C-terminus: MFS-type transporter avaJ (517 aa).

Positions 1–12 (MTSPEHSEDERQ) are enriched in basic and acidic residues. The interval 1-28 (MTSPEHSEDERQPLLTKPSGPDESQSGF) is disordered. A helical membrane pass occupies residues 40–60 (AMWLLPMYTLYAITAGSLIIP). An N-linked (GlcNAc...) asparagine glycan is attached at asparagine 63. The next 5 membrane-spanning stretches (helical) occupy residues 103–123 (IYGT…LMGF), 131–151 (PILL…LAAL), 161–181 (WLLV…ATTA), 204–224 (AAFT…LSVF), and 230–250 (AYWL…LALP). Asparagine 265 carries an N-linked (GlcNAc...) asparagine glycan. Helical transmembrane passes span 299–319 (MYIV…LVPL), 338–358 (FLTG…PLFM), 391–411 (LLLQ…LGVI), 442–462 (VLLG…PSGM), and 476–496 (ALFA…MFIG). 2 N-linked (GlcNAc...) asparagine glycosylation sites follow: asparagine 497 and asparagine 512.

The protein belongs to the major facilitator superfamily. TCR/Tet family.

The protein localises to the membrane. It functions in the pathway secondary metabolite biosynthesis. In terms of biological role, MFS-type transporter; part of the cluster that mediates the biosynthesis of a highly modified cyclo-arginine-tryptophan dipeptide (cRW). This chain is MFS-type transporter avaJ, found in Aspergillus versicolor.